Consider the following 581-residue polypeptide: MDIIKGNLDGISKPASNSRIRPGSRSSNASLEVLSTEPGSFKVDTASNLNSGKEDHSESSNTENRRTSNDDKQESCSEKIKLAEEGSDEDLDLVQHQIISECSDEPKLKELDSQLQDAIQKMKKLDKILAKKQRREKEIKKQGLEMRIKLWEEIKSAKYSEAWQSKEEMENTKKFLSLTAVSEETVGPSHEEEDTFSSVFHTQIPPEEYEMQMQKLNKDFTCDVERNESLIKSGKKPFSNTEKIELRGKHNQDFIKRNIELAKESRNPVVMVDREKKRLVELLKDLDEKDSGLSSSEGDQSGWVVPVKGYELAVTQHQQLAEIDIKLQELSAASPTISSFSPRLENRNNQKPDRDGERNMEVTPGEKILRNTKEQRDLHNRLREIDEKLKMMKENVLESTSCLSEEQLKCLLDECILKQKSIIKLSSERKKEDIEDVTPVFPQLSRSIISKLLNESETKVQKTEVEDADMLESEECEASKGYYLTKALTGHNMSEALVTEAENMKCLQFSKDVIISDTKDYFMSKTLGIGRLKRPSFLDDPLYGISVSLSSEDQHLKLSSPENTIADEQETKDAAEECKEP.

Residues 1–77 are disordered; it reads MDIIKGNLDG…SNDDKQESCS (77 aa). The span at 14 to 30 shows a compositional bias: polar residues; it reads PASNSRIRPGSRSSNAS. The span at 52–77 shows a compositional bias: basic and acidic residues; that stretch reads GKEDHSESSNTENRRTSNDDKQESCS. Ser-87 carries the phosphoserine modification. Residues 105-153 are a coiled coil; the sequence is EPKLKELDSQLQDAIQKMKKLDKILAKKQRREKEIKKQGLEMRIKLWEE. Disordered regions lie at residues 338 to 365 and 555 to 581; these read SSFSPRLENRNNQKPDRDGERNMEVTPG and HLKLSSPENTIADEQETKDAAEECKEP. Composition is skewed to basic and acidic residues over residues 344–360 and 569–581; these read LENRNNQKPDRDGERNM and QETKDAAEECKEP.

The protein belongs to the FSIP1 family.

This is Fibrous sheath-interacting protein 1 (FSIP1) from Homo sapiens (Human).